We begin with the raw amino-acid sequence, 693 residues long: Elongation factor G (693 aa).

Residues 8 to 282 (EKTRNIGIMA…AVIDYLPSPL (275 aa)) form the tr-type G domain. GTP is bound by residues 17 to 24 (AHVDAGKT), 81 to 85 (DTPGH), and 135 to 138 (NKMD).

It belongs to the TRAFAC class translation factor GTPase superfamily. Classic translation factor GTPase family. EF-G/EF-2 subfamily.

It localises to the cytoplasm. Catalyzes the GTP-dependent ribosomal translocation step during translation elongation. During this step, the ribosome changes from the pre-translocational (PRE) to the post-translocational (POST) state as the newly formed A-site-bound peptidyl-tRNA and P-site-bound deacylated tRNA move to the P and E sites, respectively. Catalyzes the coordinated movement of the two tRNA molecules, the mRNA and conformational changes in the ribosome. This Streptococcus suis (strain 05ZYH33) protein is Elongation factor G.